A 592-amino-acid chain; its full sequence is Aspartate--tRNA ligase (592 aa).

Glu171 contributes to the L-aspartate binding site. An aspartate region spans residues 195–198; sequence QLFK. Arg217 provides a ligand contact to L-aspartate. Residues 217 to 219 and Gln226 each bind ATP; that span reads RDE. Residue His448 participates in L-aspartate binding. Glu482 contacts ATP. Arg489 provides a ligand contact to L-aspartate. 534 to 537 lines the ATP pocket; it reads GLDR.

Belongs to the class-II aminoacyl-tRNA synthetase family. Type 1 subfamily. As to quaternary structure, homodimer.

The protein localises to the cytoplasm. The catalysed reaction is tRNA(Asp) + L-aspartate + ATP = L-aspartyl-tRNA(Asp) + AMP + diphosphate. Catalyzes the attachment of L-aspartate to tRNA(Asp) in a two-step reaction: L-aspartate is first activated by ATP to form Asp-AMP and then transferred to the acceptor end of tRNA(Asp). The chain is Aspartate--tRNA ligase from Vibrio campbellii (strain ATCC BAA-1116).